The following is a 490-amino-acid chain: Aspartyl/glutamyl-tRNA(Asn/Gln) amidotransferase subunit B (490 aa).

Belongs to the GatB/GatE family. GatB subfamily. As to quaternary structure, heterotrimer of A, B and C subunits.

The catalysed reaction is L-glutamyl-tRNA(Gln) + L-glutamine + ATP + H2O = L-glutaminyl-tRNA(Gln) + L-glutamate + ADP + phosphate + H(+). It carries out the reaction L-aspartyl-tRNA(Asn) + L-glutamine + ATP + H2O = L-asparaginyl-tRNA(Asn) + L-glutamate + ADP + phosphate + 2 H(+). In terms of biological role, allows the formation of correctly charged Asn-tRNA(Asn) or Gln-tRNA(Gln) through the transamidation of misacylated Asp-tRNA(Asn) or Glu-tRNA(Gln) in organisms which lack either or both of asparaginyl-tRNA or glutaminyl-tRNA synthetases. The reaction takes place in the presence of glutamine and ATP through an activated phospho-Asp-tRNA(Asn) or phospho-Glu-tRNA(Gln). The protein is Aspartyl/glutamyl-tRNA(Asn/Gln) amidotransferase subunit B of Zymomonas mobilis subsp. mobilis (strain ATCC 31821 / ZM4 / CP4).